The chain runs to 272 residues: Transcription factor PU.1 (272 aa).

A disordered region spans residues 126–165 (SPAHQQSSDEEEGERQSPPLEVSDGEADGLEPGPGLLHGE). A phosphoserine mark is found at S142 and S148. Positions 155–165 (LEPGPGLLHGE) are enriched in low complexity. Positions 172 to 255 (IRLYQFLLDL…VKKKLTYQFS (84 aa)) form a DNA-binding region, ETS. DNA contacts are provided by K219, R232, R235, and K245.

It belongs to the ETS family. In terms of assembly, binds DNA as a monomer. Can form homomers. Directly interacts with CEBPD/NF-IL6-beta; this interaction does not affect DNA-binding properties of each partner. Interacts with NONO/p54(nrb). Interacts with RUNX1/AML1. Interacts with GFI1; the interaction represses SPI1 transcriptional activity, hence blocks SPI1-induced macrophage differentiation of myeloid progenitor cells. Interacts with CEBPE. Interacts with IRF4/Pip and IRF8. Interacts with JUN. Interacts with RB1. Interacts with TBP. In terms of tissue distribution, expressed in spleen, thymus and bone-marrow macrophages.

Its subcellular location is the nucleus. Its activity is regulated as follows. Transcriptional activity at macrophage-specific genes is inhibited by interaction with GFI1, which results in inhibition of SPI1-induced macrophage differentiation of myeloid progenitor cells, but not that of the granulocyte lineage. In terms of biological role, pioneer transcription factor, which controls hematopoietic cell fate by decompacting stem cell heterochromatin and allowing other transcription factors to enter otherwise inaccessible genomic sites. Once in open chromatin, can directly control gene expression by binding genetic regulatory elements and can also more broadly influence transcription by recruiting transcription factors, such as interferon regulatory factors (IRFs), to otherwise inaccessible genomic regions. Transcriptionally activates genes important for myeloid and lymphoid lineages, such as CSF1R. Transcriptional activation from certain promoters, possibly containing low affinity binding sites, is achieved cooperatively with other transcription factors. FCER1A transactivation is achieved in cooperation with GATA1. May be particularly important for the pro- to pre-B cell transition. Binds (via the ETS domain) onto the purine-rich DNA core sequence 5'-GAGGAA-3', also known as the PU-box. In vitro can bind RNA and interfere with pre-mRNA splicing. The chain is Transcription factor PU.1 (Spi1) from Mus musculus (Mouse).